Reading from the N-terminus, the 269-residue chain is Tryptophan synthase alpha chain (269 aa).

Catalysis depends on proton acceptor residues Glu-49 and Asp-60.

This sequence belongs to the TrpA family. Tetramer of two alpha and two beta chains.

It catalyses the reaction (1S,2R)-1-C-(indol-3-yl)glycerol 3-phosphate + L-serine = D-glyceraldehyde 3-phosphate + L-tryptophan + H2O. It participates in amino-acid biosynthesis; L-tryptophan biosynthesis; L-tryptophan from chorismate: step 5/5. In terms of biological role, the alpha subunit is responsible for the aldol cleavage of indoleglycerol phosphate to indole and glyceraldehyde 3-phosphate. This chain is Tryptophan synthase alpha chain, found in Klebsiella aerogenes (Enterobacter aerogenes).